We begin with the raw amino-acid sequence, 248 residues long: Flavodoxin/ferredoxin--NADP reductase (248 aa).

One can recognise an FAD-binding FR-type domain in the interval 2-101 (ADWVTGKVTK…SEAAGFFVLD (100 aa)). Residue D17 participates in NADP(+) binding. FAD contacts are provided by residues 50–53 (RAYS), Y66, 74–76 (KLS), and T116. NADP(+) contacts are provided by residues 143 to 144 (AR), 173 to 174 (SR), R184, 214 to 216 (NPQ), and D220. An FAD-binding site is contributed by 247-248 (YW).

It belongs to the ferredoxin--NADP reductase type 1 family. Monomer. It depends on FAD as a cofactor.

It is found in the cytoplasm. It catalyses the reaction 2 reduced [2Fe-2S]-[ferredoxin] + NADP(+) + H(+) = 2 oxidized [2Fe-2S]-[ferredoxin] + NADPH. The catalysed reaction is reduced [flavodoxin] + NADP(+) = oxidized [flavodoxin] + NADPH + 2 H(+). Its function is as follows. Transports electrons between flavodoxin or ferredoxin and NADPH. Reduces flavodoxin 1, flavodoxin 2 and ferredoxin, ferredoxin being the kinetically and thermodynamically preferred partner. Required for the activation of several enzymes such as pyruvate formate-lyase, anaerobic ribonucleotide reductase and cobalamin-dependent methionine synthase. The chain is Flavodoxin/ferredoxin--NADP reductase from Escherichia coli (strain K12).